Consider the following 89-residue polypeptide: Small ribosomal subunit protein uS14 (89 aa).

Belongs to the universal ribosomal protein uS14 family. Part of the 30S ribosomal subunit. Contacts proteins S3 and S10.

Its function is as follows. Binds 16S rRNA, required for the assembly of 30S particles and may also be responsible for determining the conformation of the 16S rRNA at the A site. This chain is Small ribosomal subunit protein uS14, found in Phytoplasma australiense.